The chain runs to 199 residues: N-(5'-phosphoribosyl)anthranilate isomerase (199 aa).

It belongs to the TrpF family.

The enzyme catalyses N-(5-phospho-beta-D-ribosyl)anthranilate = 1-(2-carboxyphenylamino)-1-deoxy-D-ribulose 5-phosphate. Its pathway is amino-acid biosynthesis; L-tryptophan biosynthesis; L-tryptophan from chorismate: step 3/5. This is N-(5'-phosphoribosyl)anthranilate isomerase from Streptococcus pneumoniae serotype 19F (strain G54).